Consider the following 743-residue polypeptide: MSSDSRPPQPDTSTQSNSESESPAISSPTPQDHAPMTNRDWWPNQIDVSMLHPHPSQASPLGADFDYPKEFAKLDVDALKADVMSVMTTSQDWWPADYGHYGGLFIRMSWHAAGTYRIQDGRGGGGQGMQRFAPLNSWPDNVSLDKARRLLWPVKQKYGSEISWADLIIFAGNCALDSMGFKTFGFGFGREDVWQPEEVMWGEEDVWLGTDKRYSGKRDLAQPYGATTMGLIYVNPEGPEGKPDPVAAAHDIRETFARMAMNDEETAALIVGGHSFGKTHGAGDADLVGPEPEAAPIEQQGFGWKSSFGSGKGKDAITSGLEVVWTPTPTQWGNGFLELLYGYEWELTKSPAGAWQFTAKDGAGAGTIPDPFGGPGRAPTMLVTDISMREDPIYRRITQRWLEHPEELTEAFAKAWYKLLHRDMGPVSRYLGPWVAEPQLWQDPVPDVDHELVDAKDVAALKSKVLASGLTVAQLVKTAWSAASSFRRTDKRGGANGGRLRLEPQKSWESNEPADLDQVLSVLEGIQQDFNSSAAGGKKISLADLIVLAGSAAVEKAAKDGGHEVSVPFSPGRTDASQENTDVESFAVLEPRADGFRNYVRVGEKAPLEHLLIERAYRLGVTAPEMTVLVGGLRALGANHGGSEHGVFTDKPGVLSNDFFVNLLDMGTEWKASDAAENVYEGCDRSSGQLKWTATANDLVFGSNSVLRALAEVYAQSDAKQKFAEDFAAAWAKVMNNDRFDLE.

Polar residues predominate over residues 1–15 (MSSDSRPPQPDTSTQ). The segment at 1-40 (MSSDSRPPQPDTSTQSNSESESPAISSPTPQDHAPMTNRD) is disordered. Residues 16 to 28 (SNSESESPAISSP) show a composition bias toward low complexity. The tryptophyl-tyrosyl-methioninium (Trp-Tyr) (with M-259) cross-link spans 110–233 (WHAAGTYRIQ…YGATTMGLIY (124 aa)). The active-site Proton acceptor is His111. The tryptophyl-tyrosyl-methioninium (Tyr-Met) (with W-110) cross-link spans 233–259 (YVNPEGPEGKPDPVAAAHDIRETFARM). Position 274 (His274) interacts with heme b. The interval 490–511 (DKRGGANGGRLRLEPQKSWESN) is disordered.

It belongs to the peroxidase family. Peroxidase/catalase subfamily. In terms of assembly, homodimer or homotetramer. It depends on heme b as a cofactor. Formation of the three residue Trp-Tyr-Met cross-link is important for the catalase, but not the peroxidase activity of the enzyme.

The catalysed reaction is H2O2 + AH2 = A + 2 H2O. The enzyme catalyses 2 H2O2 = O2 + 2 H2O. In terms of biological role, bifunctional enzyme with both catalase and broad-spectrum peroxidase activity. This chain is Catalase-peroxidase, found in Mycobacterium ulcerans (strain Agy99).